Reading from the N-terminus, the 58-residue chain is Short neurotoxin MS11 (58 aa).

Disulfide bonds link cysteine 3-cysteine 20, cysteine 13-cysteine 38, cysteine 42-cysteine 50, and cysteine 51-cysteine 56.

This sequence belongs to the three-finger toxin family. Short-chain subfamily. As to expression, expressed by the venom gland.

It is found in the secreted. In terms of biological role, produces peripheral paralysis by blocking neuromuscular transmission at the postsynaptic site. Binds to and inhibits the endogenous nicotinic acetylcholine receptors (nAChR) in the human rhabdomyosarcoma TE 671 cell line with an IC(50) of 266 mM. Not toxic to mice by intraperitoneal injection or to zebrafish by injection at the back dorsolateral region. This Micrurus surinamensis (Surinam coral snake) protein is Short neurotoxin MS11.